The chain runs to 245 residues: MVLNSDLTTQDKERIINPIERPTITQDLSENVILTTVDDLYNWARLSSLWPLLFGTACCFIEFAALIGSRFDFDRFGLIPRSSPRQADLIITAGTITMKMAPQLVRLYEQMPEPKYVIAMGACTITGGMFSVDSPTAVRGVDKLIPVDVYLPGCPPRPEAIIDAIIKLRKKIANDSMQERSLIRQTHRFYSTTHNLKPVPDILTGKYMQSETRFNPPKELTEAIGLPVPPALLTSQTQKEEQKRG.

Residues Cys-58, Cys-59, Cys-123, and Cys-154 each coordinate [4Fe-4S] cluster.

It belongs to the complex I 20 kDa subunit family. NDH-1 can be composed of about 15 different subunits; different subcomplexes with different compositions have been identified which probably have different functions. It depends on [4Fe-4S] cluster as a cofactor.

The protein resides in the cellular thylakoid membrane. The catalysed reaction is a plastoquinone + NADH + (n+1) H(+)(in) = a plastoquinol + NAD(+) + n H(+)(out). It catalyses the reaction a plastoquinone + NADPH + (n+1) H(+)(in) = a plastoquinol + NADP(+) + n H(+)(out). Its function is as follows. NDH-1 shuttles electrons from an unknown electron donor, via FMN and iron-sulfur (Fe-S) centers, to quinones in the respiratory and/or the photosynthetic chain. The immediate electron acceptor for the enzyme in this species is believed to be plastoquinone. Couples the redox reaction to proton translocation, and thus conserves the redox energy in a proton gradient. Cyanobacterial NDH-1 also plays a role in inorganic carbon-concentration. The polypeptide is NAD(P)H-quinone oxidoreductase subunit K (Nostoc sp. (strain PCC 7120 / SAG 25.82 / UTEX 2576)).